Reading from the N-terminus, the 250-residue chain is Ribonuclease HII (250 aa).

The region spanning 66-250 is the RNase H type-2 domain; it reads QLVAGVDEVG…TFAPVSDFFK (185 aa). D72, E73, and D164 together coordinate a divalent metal cation.

This sequence belongs to the RNase HII family. Mn(2+) is required as a cofactor. It depends on Mg(2+) as a cofactor.

The protein localises to the cytoplasm. The enzyme catalyses Endonucleolytic cleavage to 5'-phosphomonoester.. Functionally, endonuclease that specifically degrades the RNA of RNA-DNA hybrids. The protein is Ribonuclease HII of Lactobacillus acidophilus (strain ATCC 700396 / NCK56 / N2 / NCFM).